The sequence spans 319 residues: ATP-dependent 6-phosphofructokinase (319 aa).

Gly11 contributes to the ATP binding site. 21–25 (RAVVR) contacts ADP. Residues 72-73 (RC) and 102-105 (GDGS) contribute to the ATP site. Residue Asp103 participates in Mg(2+) binding. 125–127 (TID) contributes to the substrate binding site. Asp127 acts as the Proton acceptor in catalysis. Arg154 contributes to the ADP binding site. Substrate-binding positions include Arg162 and 169-171 (MGR). ADP contacts are provided by residues 185–187 (GAE), Arg211, and 213–215 (KKH). Residues Glu222, Arg243, and 249–252 (HVQR) contribute to the substrate site.

This sequence belongs to the phosphofructokinase type A (PFKA) family. ATP-dependent PFK group I subfamily. Prokaryotic clade 'B1' sub-subfamily. As to quaternary structure, homotetramer. Requires Mg(2+) as cofactor.

Its subcellular location is the cytoplasm. It carries out the reaction beta-D-fructose 6-phosphate + ATP = beta-D-fructose 1,6-bisphosphate + ADP + H(+). It functions in the pathway carbohydrate degradation; glycolysis; D-glyceraldehyde 3-phosphate and glycerone phosphate from D-glucose: step 3/4. Allosterically activated by ADP and other diphosphonucleosides, and allosterically inhibited by phosphoenolpyruvate. In terms of biological role, catalyzes the phosphorylation of D-fructose 6-phosphate to fructose 1,6-bisphosphate by ATP, the first committing step of glycolysis. The chain is ATP-dependent 6-phosphofructokinase from Bacillus cytotoxicus (strain DSM 22905 / CIP 110041 / 391-98 / NVH 391-98).